The chain runs to 753 residues: A-kinase anchor protein 200 (753 aa).

Disordered stretches follow at residues 1 to 345 (MGKA…QIEA), 462 to 482 (VETR…PSRV), 531 to 604 (TEQE…IDPA), 620 to 641 (VEKE…SDEQ), and 658 to 684 (VEET…DKEN). The N-myristoyl glycine moiety is linked to residue Gly-2. 2 stretches are compositionally biased toward basic and acidic residues: residues 8–38 (RSID…DQKT) and 59–77 (AVEK…DLTT). A compositionally biased stretch (low complexity) spans 81–93 (AAVAEGGDAVAET). Residues 119 to 148 (KSKSKKDKVKKKWSFRSISFGKKDKQKPAK) are F-actin binding. Residues 120–132 (SKSKKDKVKKKWS) are compositionally biased toward basic residues. Residues Ser-132, Ser-135, and Ser-137 each carry the phosphoserine modification. The span at 139-151 (GKKDKQKPAKSEE) shows a compositional bias: basic and acidic residues. The span at 152–181 (ATSPTSGTTSPTTAEAEAAPAGDAAVAEPS) shows a compositional bias: low complexity. The segment covering 216–227 (EQEKQANGETEK) has biased composition (basic and acidic residues). Residues 246 to 262 (EPATVTATESNTTATEE) are compositionally biased toward low complexity. Positions 345 to 725 (ASSEVIETVT…AEQEGESNNK (381 aa)) are interaction with PKA-R2. A compositionally biased stretch (pro residues) spans 468–480 (SPPPPLPKSPPPS). The segment covering 532-544 (EQEKQQEEAKVDS) has biased composition (basic and acidic residues). Residues 545-561 (VPETIEESSSTVVVEEV) are compositionally biased toward low complexity. A compositionally biased stretch (basic and acidic residues) spans 578–594 (DVQKPIEDQDTPDEKES). A compositionally biased stretch (low complexity) spans 626-638 (SISSNVAESSSVS). Over residues 674–684 (EEAHSDNDKEN) the composition is skewed to basic and acidic residues.

Homodimer. Interacts with Cam; interaction is calcium-dependent and is inhibited by PKC-mediated phosphorylation of Akap200. Interacts with N/Notch; the interaction stabilizes N/Notch protein levels by preventing Cbl-mediated ubiquitination and subsequent lysosomal degradation of N/Notch. Interacts with Pka-R2. Binds to F-actin; interaction is independent of myristoylation, but is inhibited by Akap200 phosphorylation and Cam binding. Isoform B: Does not bind to Pka-R2. Myristoylated; myristoylation promotes accumulation at the cell periphery. Post-translationally, phosphorylated; phosphorylation prevents binding to F-actin and Cam. Detected in the brain in both neurons and glia (including perineurial glia); specifically in the neuronal nuclei in the cortex and synaptic neuropil (at protein level). Detected in germline cells, somatic follicle cells and outer rim of the ring canals during oogenesis (at protein level). Isoform A: Detected in the adult (at protein level). Isoform B: Detected in the adult with higher levels in the head (at protein level).

The protein localises to the cytoplasm. It is found in the cytosol. The protein resides in the cell membrane. It localises to the cytoskeleton. In terms of biological role, scaffolding protein involved in the regulation of PKA signaling and anchoring to the actin cytoskeleton integrating signals propagated by cAMP, diacylglycerol and calcium. Contributes to the maintenance and regulation of cytoskeletal structures in germline via PKA-mediated signaling. As part of ethanol response in the glia, mediates ethanol-induced structural remodeling of actin cytoskeleton and perineurial membrane topology by anchoring PKA to the membrane of perineurial glia. In specific tissues such as eye and thorax, promotes N/Notch protein stability by inhibiting Cbl-mediated ubiquitination and lysosomal degradation pathway of N/Notch in a PKA-independent way. In the circadian brain neurons evening cells (E-cells), might have a role in circadian pacemaker synchronization by playing a redundant role in signaling downstream of the G protein-couple receptor Pdfr. The polypeptide is A-kinase anchor protein 200 (Drosophila melanogaster (Fruit fly)).